Consider the following 72-residue polypeptide: MCLLYTHFYHLILNTRRVDSSFFVFSFHLYFLNDNKGMSPLCLSLVGSGLHLSVMHLLFHVFLFLFDSFLRP.

Its subcellular location is the plastid. It localises to the chloroplast. This is an uncharacterized protein from Oenothera berteroana (Bertero's evening primrose).